The sequence spans 496 residues: Trimethylamine methyltransferase MttB (496 aa).

Position 331 (O331) is a non-standard amino acid, pyrrolysine.

Belongs to the trimethylamine methyltransferase family.

The enzyme catalyses Co(I)-[trimethylamine-specific corrinoid protein] + trimethylamine + H(+) = methyl-Co(III)-[trimethylamine-specific corrinoid protein] + dimethylamine. Its function is as follows. Catalyzes the transfer of a methyl group from trimethylamine to the corrinoid cofactor of MttC. This is Trimethylamine methyltransferase MttB from Desulfitobacterium hafniense (strain DSM 10664 / DCB-2).